Here is a 139-residue protein sequence, read N- to C-terminus: Small ribosomal subunit protein bS6 (139 aa).

Residues 97–139 (TEASPMAKAKDERDSRRSSEGERRSAPAEATEEVKETAEKAAE) form a disordered region. Residues 104 to 139 (KAKDERDSRRSSEGERRSAPAEATEEVKETAEKAAE) are compositionally biased toward basic and acidic residues.

The protein belongs to the bacterial ribosomal protein bS6 family.

Its function is as follows. Binds together with bS18 to 16S ribosomal RNA. This chain is Small ribosomal subunit protein bS6, found in Shewanella sediminis (strain HAW-EB3).